The sequence spans 146 residues: Cyanate hydratase (146 aa).

Active-site residues include Arg-87, Glu-90, and Ser-113.

The protein belongs to the cyanase family.

It catalyses the reaction cyanate + hydrogencarbonate + 3 H(+) = NH4(+) + 2 CO2. Its function is as follows. Catalyzes the reaction of cyanate with bicarbonate to produce ammonia and carbon dioxide. This Marinomonas sp. (strain MWYL1) protein is Cyanate hydratase.